We begin with the raw amino-acid sequence, 128 residues long: MSDPVMDAYTQAYNSSGNMVQAFGVISESGQVLWQSNNWDLTADASTLMSAVKSRASSVIQNQVKYSTMRSTPESLVARNVQGSGILILTKIDTTSDRWVVAWADAQAQPDGVYVDVDRAAKTLRGKI.

It belongs to the Asgard profilin family.

It localises to the cytoplasm. Its subcellular location is the cytoskeleton. Functionally, has no profilin activity against rabbit actin. The polypeptide is Thor profilin (Thorarchaeota archaeon (strain AB_25)).